Consider the following 1006-residue polypeptide: Kinesin-like protein KIN-5C (1006 aa).

The region spanning 9–355 (NVQVLLRCRP…LDYAHRAKNI (347 aa)) is the Kinesin motor domain. ATP is bound at residue 95 to 102 (GQTGTGKT). Positions 371–522 (IKDLYGEIER…NASLFQKIAR (152 aa)) form a coiled coil.

Belongs to the TRAFAC class myosin-kinesin ATPase superfamily. Kinesin family. KIN-5/BimC subfamily.

It localises to the cytoplasm. The protein resides in the cytoskeleton. It is found in the spindle. Its function is as follows. Responsible for microtubule translocation. May be important for the organization of phragmoplast-specific arrays of microtubules. Plays an essential role in stabilizing the mitotic spindle. Required during mitotic cytokinesis. The polypeptide is Kinesin-like protein KIN-5C (Nicotiana tabacum (Common tobacco)).